The chain runs to 347 residues: Indole-3-glycerol phosphate lyase, chloroplastic (347 aa).

Disordered regions lie at residues methionine 1–arginine 38 and alanine 64–proline 89. The transit peptide at methionine 1–arginine 53 directs the protein to the chloroplast. Residues serine 8–leucine 27 show a composition bias toward low complexity. Positions alanine 64–proline 76 are enriched in pro residues.

The protein belongs to the TrpA family. Tetramer of two alpha and two beta chains for the tryptophan synthase activity. Homodimer of alpha chains for the indole-3-glycerol phosphate lyase activity.

The protein localises to the plastid. Its subcellular location is the chloroplast. It carries out the reaction (1S,2R)-1-C-(indol-3-yl)glycerol 3-phosphate = indole + D-glyceraldehyde 3-phosphate. It catalyses the reaction (1S,2R)-1-C-(indol-3-yl)glycerol 3-phosphate + L-serine = D-glyceraldehyde 3-phosphate + L-tryptophan + H2O. Its pathway is secondary metabolite biosynthesis; 2,4-dihydroxy-1,4-benzoxazin-3-one biosynthesis; 2,4-dihydroxy-1,4-benzoxazin-3-one from indoleglycerol phosphate: step 1/5. The protein operates within amino-acid biosynthesis; L-tryptophan biosynthesis; L-tryptophan from chorismate: step 5/5. The alpha subunit is responsible for the aldol cleavage of indoleglycerol phosphate to indole and glyceraldehyde 3-phosphate. In bacteria, tryptophan synthase alpha (TSA) activity is almost completely dependent on formation of an active alpha2beta2 complex with tryptophan synthase beta (TSB), and indole is usually not released during tryptophan synthesis. In maize, the TSA homolog BX1 catalyzes the formation of free indole from indole-3-glycerol phosphate, independently of TSB. The polypeptide is Indole-3-glycerol phosphate lyase, chloroplastic (BX1) (Zea mays (Maize)).